Here is a 312-residue protein sequence, read N- to C-terminus: Acetyl-coenzyme A carboxylase carboxyl transferase subunit alpha (312 aa).

In terms of domain architecture, CoA carboxyltransferase C-terminal spans 36 to 286; that stretch reads NLEKEISKTY…ADYVKKSLNE (251 aa).

This sequence belongs to the AccA family. Acetyl-CoA carboxylase is a heterohexamer composed of biotin carboxyl carrier protein (AccB), biotin carboxylase (AccC) and two subunits each of ACCase subunit alpha (AccA) and ACCase subunit beta (AccD).

Its subcellular location is the cytoplasm. The catalysed reaction is N(6)-carboxybiotinyl-L-lysyl-[protein] + acetyl-CoA = N(6)-biotinyl-L-lysyl-[protein] + malonyl-CoA. It functions in the pathway lipid metabolism; malonyl-CoA biosynthesis; malonyl-CoA from acetyl-CoA: step 1/1. Functionally, component of the acetyl coenzyme A carboxylase (ACC) complex. First, biotin carboxylase catalyzes the carboxylation of biotin on its carrier protein (BCCP) and then the CO(2) group is transferred by the carboxyltransferase to acetyl-CoA to form malonyl-CoA. The sequence is that of Acetyl-coenzyme A carboxylase carboxyl transferase subunit alpha from Campylobacter jejuni subsp. doylei (strain ATCC BAA-1458 / RM4099 / 269.97).